Consider the following 364-residue polypeptide: Protein Wnt-6 (364 aa).

Residues 1-23 (MLPPVPSRLGLLLLLLCPAHVDG) form the signal peptide. Disulfide bonds link Cys-75/Cys-86, Cys-123/Cys-131, Cys-133/Cys-171, Cys-221/Cys-235, Cys-223/Cys-230, Cys-293/Cys-324, Cys-309/Cys-319, Cys-323/Cys-363, Cys-339/Cys-354, Cys-341/Cys-351, and Cys-346/Cys-347. N-linked (GlcNAc...) asparagine glycosylation is present at Asn-85. The disordered stretch occupies residues 140–162 (APPRPSGLLGTPGPPGPTGSPDA). Residue Ser-227 is the site of O-palmitoleoyl serine; by PORCN attachment. The N-linked (GlcNAc...) asparagine glycan is linked to Asn-310.

Belongs to the Wnt family. Interacts with PORCN. Palmitoleoylation is required for efficient binding to frizzled receptors. Depalmitoleoylation leads to Wnt signaling pathway inhibition. Detected in ileum, colon and stomach (at protein level).

The protein resides in the secreted. It localises to the extracellular space. It is found in the extracellular matrix. Its function is as follows. Ligand for members of the frizzled family of seven transmembrane receptors. Probable developmental protein. May be a signaling molecule which affects the development of discrete regions of tissues. Is likely to signal over only few cell diameters. This Mus musculus (Mouse) protein is Protein Wnt-6 (Wnt6).